The following is a 645-amino-acid chain: Sister chromatid cohesion protein 1 (645 aa).

Disordered regions lie at residues 292–311 (FEPE…FALE), 495–527 (QSGF…GQLE), and 619–645 (CPLS…MRPV).

The protein belongs to the rad21 family. In terms of assembly, component of the cohesin complex, composed of the smc-1 and smc-3 heterodimer attached via their hinge domain, scc-1 which links them, and scc-3. Interacts with smc-1, smc-3, scc-3 and tim-1.

It is found in the nucleus. The protein resides in the chromosome. Its subcellular location is the cytoplasm. Functionally, cleavable component of the cohesin complex involved in chromosome cohesion during cell cycle. The cohesin complex is required for the cohesion of sister chromatids after DNA replication. The cohesin complex apparently forms a large proteinaceous ring within which sister chromatids can be trapped. At metaphase-anaphase transition, this protein is cleaved and dissociates from chromatin, allowing sister chromatids to segregate. This chain is Sister chromatid cohesion protein 1, found in Caenorhabditis elegans.